The following is a 236-amino-acid chain: MTIYLTELDTTSIEFPSPFDALDEPNGLLAFGGDLSPIRILNAYSQGIFPWYGPGEPILWWSPAPRAVFNPKTFEPSKSLKKFQRKHNYRVSINQATDRVIGYCSSLRPEEETWLNNDMQAAYRELASLGFCHSVEVWQGDELIGGLYGLQRGQVFCGESMFSLKTNASKIALWYFCEHFTQFGGQLIDCQVMNPHLESLGAIEVDRDEFLSSLRLLKETSVNDACSKKQWLKEMP.

The protein belongs to the L/F-transferase family.

The protein resides in the cytoplasm. It catalyses the reaction N-terminal L-lysyl-[protein] + L-leucyl-tRNA(Leu) = N-terminal L-leucyl-L-lysyl-[protein] + tRNA(Leu) + H(+). It carries out the reaction N-terminal L-arginyl-[protein] + L-leucyl-tRNA(Leu) = N-terminal L-leucyl-L-arginyl-[protein] + tRNA(Leu) + H(+). The enzyme catalyses L-phenylalanyl-tRNA(Phe) + an N-terminal L-alpha-aminoacyl-[protein] = an N-terminal L-phenylalanyl-L-alpha-aminoacyl-[protein] + tRNA(Phe). Functionally, functions in the N-end rule pathway of protein degradation where it conjugates Leu, Phe and, less efficiently, Met from aminoacyl-tRNAs to the N-termini of proteins containing an N-terminal arginine or lysine. This chain is Leucyl/phenylalanyl-tRNA--protein transferase, found in Vibrio atlanticus (strain LGP32) (Vibrio splendidus (strain Mel32)).